The primary structure comprises 372 residues: NAD(P)H-quinone oxidoreductase subunit 1 (372 aa).

A run of 8 helical transmembrane segments spans residues 27–47 (IIWL…GVLV), 97–117 (ILFT…WLIV), 128–148 (VGIG…GLLM), 176–196 (LALS…IDIV), 204–224 (ILSW…ICAL), 266–286 (ILSA…PIPV), 308–328 (SIGI…AILL), and 347–367 (FLLP…LALP).

This sequence belongs to the complex I subunit 1 family. In terms of assembly, NDH-1 is composed of at least 11 different subunits.

Its subcellular location is the cellular thylakoid membrane. It carries out the reaction a plastoquinone + NADH + (n+1) H(+)(in) = a plastoquinol + NAD(+) + n H(+)(out). The catalysed reaction is a plastoquinone + NADPH + (n+1) H(+)(in) = a plastoquinol + NADP(+) + n H(+)(out). Functionally, NDH-1 shuttles electrons from an unknown electron donor, via FMN and iron-sulfur (Fe-S) centers, to quinones in the respiratory and/or the photosynthetic chain. The immediate electron acceptor for the enzyme in this species is believed to be plastoquinone. Couples the redox reaction to proton translocation, and thus conserves the redox energy in a proton gradient. This chain is NAD(P)H-quinone oxidoreductase subunit 1, found in Prochlorococcus marinus (strain MIT 9515).